A 338-amino-acid polypeptide reads, in one-letter code: MNLQRFPRYPLTFGPTPIQPLKRLSAHLGGKVELFAKREDCNSGLAFGGNKTRKLEYLIPEALEGGYDTLVSIGGIQSNQTRQVAAVAAHLGLKCVLVQENWVNYSDAVYDRVGNIEMSRIMGADVRLDSAGFDIGIRPSWEQAMDDVRKRGGKPFPIPAGCSEHPLGGLGFVGFAEEVRQQEAELGFKFDYIVVCSVTGSTQAGMVVGFAADGRADKVIGIDASAKPEQTRAQILRIAQHTAELVDLGRNITERDVVLDTRYGGPEYGLPNEGTLEAIRLCARQEAMLTDPVYEGKSMHGMIDMVRNGEFPAGSRVLYAHLGGVPALNAYSFIFRNG.

Residue K51 is modified to N6-(pyridoxal phosphate)lysine. The Nucleophile role is filled by S78.

The protein belongs to the ACC deaminase/D-cysteine desulfhydrase family. In terms of assembly, homotrimer. Pyridoxal 5'-phosphate serves as cofactor.

The enzyme catalyses 1-aminocyclopropane-1-carboxylate + H2O = 2-oxobutanoate + NH4(+). Its function is as follows. Catalyzes a cyclopropane ring-opening reaction, the irreversible conversion of 1-aminocyclopropane-1-carboxylate (ACC) to ammonia and alpha-ketobutyrate. Allows growth on ACC as a nitrogen source. In Ralstonia pickettii (strain 12J), this protein is 1-aminocyclopropane-1-carboxylate deaminase.